The primary structure comprises 367 residues: Peptide chain release factor 2 (367 aa).

At Gln254 the chain carries N5-methylglutamine.

This sequence belongs to the prokaryotic/mitochondrial release factor family. Methylated by PrmC. Methylation increases the termination efficiency of RF2.

It localises to the cytoplasm. Its function is as follows. Peptide chain release factor 2 directs the termination of translation in response to the peptide chain termination codons UGA and UAA. In Bordetella bronchiseptica (strain ATCC BAA-588 / NCTC 13252 / RB50) (Alcaligenes bronchisepticus), this protein is Peptide chain release factor 2.